The primary structure comprises 591 residues: V-type ATP synthase alpha chain (591 aa).

233 to 240 (GPFGAGKT) serves as a coordination point for ATP.

This sequence belongs to the ATPase alpha/beta chains family.

It carries out the reaction ATP + H2O + 4 H(+)(in) = ADP + phosphate + 5 H(+)(out). Functionally, produces ATP from ADP in the presence of a proton gradient across the membrane. The V-type alpha chain is a catalytic subunit. The chain is V-type ATP synthase alpha chain from Streptococcus pyogenes serotype M12 (strain MGAS2096).